A 200-amino-acid polypeptide reads, in one-letter code: MGRLHCTEDPVPEAVGGDMQQLNQLGAQQFSALTEVLFHFLTEPKEVERFLAQLSEFATTNQISLGSLRSIVKSLLLVPNGALKKSLTAKQVQADFITLGLSEEKATYFSEKWKQNAPTLARWAIGQTLMINQLIDMEWKFGVTSGSSELEKVGSIFLQLKLVVKKGNQTENVYIELTLPQFYSFLHEMERVRTSMECFC.

The COMM domain occupies 133–200 (QLIDMEWKFG…RVRTSMECFC (68 aa)).

The protein belongs to the COMM domain-containing protein 7 family. In terms of assembly, component of the commander complex consisting of the CCC subcomplex and the retriever subcomplex. Component of the CCC (COMMD/CCDC22/CCDC93) subcomplex consisting of COMMD1, COMMD2, COMMD3, COMMD4, COMMD5, COMMD6, COMMD7, COMMD8, COMMD9, COMMD10, CCDC22 and CCDC93; within the complex forms a heterodimer with COMMD9. Interacts with RELA. Interacts with CCDC22, CCDC93, SCNN1B, CUL7. In terms of tissue distribution, widely expressed with highest expression in lung.

Its subcellular location is the cytoplasmic vesicle. Scaffold protein in the commander complex that is essential for endosomal recycling of transmembrane cargos; the commander complex is composed of the CCC subcomplex and the retriever subcomplex. May modulate activity of cullin-RING E3 ubiquitin ligase (CRL) complexes. Associates with the NF-kappa-B complex and suppresses its transcriptional activity. In Homo sapiens (Human), this protein is COMM domain-containing protein 7 (COMMD7).